Here is a 270-residue protein sequence, read N- to C-terminus: Tryptophan synthase alpha chain (270 aa).

Catalysis depends on proton acceptor residues Glu-50 and Asp-61.

Belongs to the TrpA family. Tetramer of two alpha and two beta chains.

It carries out the reaction (1S,2R)-1-C-(indol-3-yl)glycerol 3-phosphate + L-serine = D-glyceraldehyde 3-phosphate + L-tryptophan + H2O. Its pathway is amino-acid biosynthesis; L-tryptophan biosynthesis; L-tryptophan from chorismate: step 5/5. The alpha subunit is responsible for the aldol cleavage of indoleglycerol phosphate to indole and glyceraldehyde 3-phosphate. The chain is Tryptophan synthase alpha chain from Chlorobium luteolum (strain DSM 273 / BCRC 81028 / 2530) (Pelodictyon luteolum).